We begin with the raw amino-acid sequence, 28 residues long: uncharacterized protein (28 aa).

The span at 1–18 (MLPRKYKPAYKKQAHRVK) shows a compositional bias: basic residues. Residues 1–28 (MLPRKYKPAYKKQAHRVKSNPQPAYTFQ) are disordered. Residues 19–28 (SNPQPAYTFQ) are compositionally biased toward polar residues.

This is an uncharacterized protein from Saccharomyces cerevisiae (strain ATCC 204508 / S288c) (Baker's yeast).